We begin with the raw amino-acid sequence, 945 residues long: Isoleucine--tRNA ligase 1 (945 aa).

Residues 66–76 (PYANGDIHLGH) carry the 'HIGH' region motif. L-isoleucyl-5'-AMP is bound at residue glutamate 581. The 'KMSKS' region motif lies at 622 to 626 (KMSKS). Lysine 625 contacts ATP. Zn(2+) contacts are provided by cysteine 908, cysteine 911, cysteine 928, and cysteine 931.

This sequence belongs to the class-I aminoacyl-tRNA synthetase family. IleS type 1 subfamily. Monomer. Requires Zn(2+) as cofactor.

It localises to the cytoplasm. The catalysed reaction is tRNA(Ile) + L-isoleucine + ATP = L-isoleucyl-tRNA(Ile) + AMP + diphosphate. Functionally, catalyzes the attachment of isoleucine to tRNA(Ile). As IleRS can inadvertently accommodate and process structurally similar amino acids such as valine, to avoid such errors it has two additional distinct tRNA(Ile)-dependent editing activities. One activity is designated as 'pretransfer' editing and involves the hydrolysis of activated Val-AMP. The other activity is designated 'posttransfer' editing and involves deacylation of mischarged Val-tRNA(Ile). This Burkholderia pseudomallei (strain K96243) protein is Isoleucine--tRNA ligase 1.